The chain runs to 211 residues: MDVADLRREYTRGGLHRADLPAEPLALFEKWLAQACEAKLTDPTAMVVGTVDADGQPWQRTVLLKHYDAEGMVFYTNMGSRKAHQLEGNPRISLLFPWHTLDRQVHVTGRVEKMSTFEVMKYFHSRPKDSQIAAWVSQQSTRISARGVLEAKFLELKQKFANGEVPLPSFWGGFRVRIDTVEFWQGGEHRLHDRFYYTREGEGWHIERLAP.

Residues 7–10 and lysine 65 each bind substrate; that span reads RREY. Residues 60–65, 75–76, arginine 81, lysine 82, and glutamine 104 contribute to the FMN site; these read RTVLLK and YT. Positions 122, 126, and 130 each coordinate substrate. FMN contacts are provided by residues 139-140 and tryptophan 184; that span reads QS. 190 to 192 provides a ligand contact to substrate; it reads RLH. Arginine 194 is a binding site for FMN.

Belongs to the pyridoxamine 5'-phosphate oxidase family. As to quaternary structure, homodimer. The cofactor is FMN.

It carries out the reaction pyridoxamine 5'-phosphate + O2 + H2O = pyridoxal 5'-phosphate + H2O2 + NH4(+). The catalysed reaction is pyridoxine 5'-phosphate + O2 = pyridoxal 5'-phosphate + H2O2. Its pathway is cofactor metabolism; pyridoxal 5'-phosphate salvage; pyridoxal 5'-phosphate from pyridoxamine 5'-phosphate: step 1/1. It functions in the pathway cofactor metabolism; pyridoxal 5'-phosphate salvage; pyridoxal 5'-phosphate from pyridoxine 5'-phosphate: step 1/1. Its function is as follows. Catalyzes the oxidation of either pyridoxine 5'-phosphate (PNP) or pyridoxamine 5'-phosphate (PMP) into pyridoxal 5'-phosphate (PLP). The chain is Pyridoxine/pyridoxamine 5'-phosphate oxidase from Aeromonas hydrophila subsp. hydrophila (strain ATCC 7966 / DSM 30187 / BCRC 13018 / CCUG 14551 / JCM 1027 / KCTC 2358 / NCIMB 9240 / NCTC 8049).